The following is a 746-amino-acid chain: NAD(P)H-quinone oxidoreductase subunit 5, chloroplastic (746 aa).

16 helical membrane passes run 9-29, 40-60, 89-109, 125-145, 147-167, 185-205, 221-241, 258-278, 280-300, 327-347, 354-374, 396-416, 425-445, 547-567, 608-628, and 723-743; these read WIIPFIPLPVPILLGVGLLLF, WTFLSIFLLSIVMIFSLYLSI, IDPLTSIMSILITTVGILVLI, FAYMGFFNTSMLGLVTSSNLI, VYFFWELVGMCSYLLIGFWFT, GDFGLLLGILGLYWITGSFEF, VNLLFLTLCAFLLFVGPIAKS, TPISALIHAATMVAAGIFLVA, LLPLFIVIPSIMYIISLIGII, LGYMMLALGMGSYRSALFHLI, ALLFLGSGSIIHSMEAIVGYS, TAFLIGTLSLCGIPPLACFWS, LLFSPIFAIIACSTAGLTAFY, ILFPMLILLLFTLFIGAIGIP, FSVSIAFFGIFIAYCLYKPFY, and YLFLYLSYVLIFLMILLFFYF.

Belongs to the complex I subunit 5 family. In terms of assembly, NDH is composed of at least 16 different subunits, 5 of which are encoded in the nucleus.

The protein resides in the plastid. Its subcellular location is the chloroplast thylakoid membrane. The catalysed reaction is a plastoquinone + NADH + (n+1) H(+)(in) = a plastoquinol + NAD(+) + n H(+)(out). It carries out the reaction a plastoquinone + NADPH + (n+1) H(+)(in) = a plastoquinol + NADP(+) + n H(+)(out). Functionally, NDH shuttles electrons from NAD(P)H:plastoquinone, via FMN and iron-sulfur (Fe-S) centers, to quinones in the photosynthetic chain and possibly in a chloroplast respiratory chain. The immediate electron acceptor for the enzyme in this species is believed to be plastoquinone. Couples the redox reaction to proton translocation, and thus conserves the redox energy in a proton gradient. The sequence is that of NAD(P)H-quinone oxidoreductase subunit 5, chloroplastic (ndhF) from Olimarabidopsis pumila (Dwarf rocket).